A 298-amino-acid chain; its full sequence is ATP synthase gamma chain (298 aa).

It belongs to the ATPase gamma chain family. F-type ATPases have 2 components, CF(1) - the catalytic core - and CF(0) - the membrane proton channel. CF(1) has five subunits: alpha(3), beta(3), gamma(1), delta(1), epsilon(1). CF(0) has three main subunits: a, b and c.

The protein resides in the cell inner membrane. Its function is as follows. Produces ATP from ADP in the presence of a proton gradient across the membrane. The gamma chain is believed to be important in regulating ATPase activity and the flow of protons through the CF(0) complex. This Granulibacter bethesdensis (strain ATCC BAA-1260 / CGDNIH1) protein is ATP synthase gamma chain.